The primary structure comprises 855 residues: Beta-mannosidase B (855 aa).

Asparagine 98 carries N-linked (GlcNAc...) asparagine glycosylation. The Proton donor role is filled by glutamate 430. Residues asparagine 693 and asparagine 730 are each glycosylated (N-linked (GlcNAc...) asparagine).

The protein belongs to the glycosyl hydrolase 2 family. Beta-mannosidase B subfamily. In terms of assembly, homodimer.

It localises to the secreted. The enzyme catalyses Hydrolysis of terminal, non-reducing beta-D-mannose residues in beta-D-mannosides.. It functions in the pathway glycan metabolism; N-glycan degradation. Functionally, exoglycosidase that cleaves the single beta-linked mannose residue from the non-reducing end of beta-mannosidic oligosaccharides of various complexity and length. Prefers mannobiose over mannotriose. Is also severely restricted by galactosyl substitutions at the +1 subsite. Has no activity against polymeric mannan. The chain is Beta-mannosidase B (man9) from Thermothelomyces thermophilus (Myceliophthora thermophila).